The sequence spans 354 residues: Uroporphyrinogen decarboxylase (354 aa).

Residues 27 to 31 (RQAGR), Asp77, Tyr154, Thr209, and His327 contribute to the substrate site.

Belongs to the uroporphyrinogen decarboxylase family. As to quaternary structure, homodimer.

The protein localises to the cytoplasm. The enzyme catalyses uroporphyrinogen III + 4 H(+) = coproporphyrinogen III + 4 CO2. The protein operates within porphyrin-containing compound metabolism; protoporphyrin-IX biosynthesis; coproporphyrinogen-III from 5-aminolevulinate: step 4/4. Catalyzes the decarboxylation of four acetate groups of uroporphyrinogen-III to yield coproporphyrinogen-III. This Escherichia coli O6:K15:H31 (strain 536 / UPEC) protein is Uroporphyrinogen decarboxylase.